The chain runs to 64 residues: MPKMKTNKGAAKRFKKTAGGIKYKHATKRHILTKRTTKNKRQLRPNAILPRCEVAAVIRMLPYA.

This sequence belongs to the bacterial ribosomal protein bL35 family.

The chain is Large ribosomal subunit protein bL35 from Vibrio parahaemolyticus serotype O3:K6 (strain RIMD 2210633).